Here is a 170-residue protein sequence, read N- to C-terminus: Urease accessory protein UreE (170 aa).

Belongs to the UreE family.

Its subcellular location is the cytoplasm. Involved in urease metallocenter assembly. Binds nickel. Probably functions as a nickel donor during metallocenter assembly. This is Urease accessory protein UreE from Helicobacter pylori (strain ATCC 700392 / 26695) (Campylobacter pylori).